We begin with the raw amino-acid sequence, 144 residues long: Necrosis-inducing secreted protein 1 (144 aa).

The N-terminal stretch at 1 to 19 (MQFRASIAAAAGLFALANA) is a signal peptide. 3 N-linked (GlcNAc...) asparagine glycosylation sites follow: N88, N126, and N133. The segment at 103-132 (QYVVAAGLYSLYGASSSPTLSHYNVTVTVG) is BAK1/SERK3-binding.

Belongs to the NIS1 effector family.

Its subcellular location is the secreted. It localises to the host cytoplasm. Its function is as follows. Secreted effector that induces necrotic lesions in Nicotiana benthamiana. Interacts with the host receptor-like kinases (RLKs) BAK1/SERK3 and BKK1/SERK4, inhibits their kinase activity and suppresses INF1-induced pathogen-associated molecular pattern (PAMP)-triggered immunity (PTI) in N.benthamiana. Also interacts with the host receptor-like cytoplasmic kinase (RLCK) BIK1 and inhibits its kinase activity, thereby inhibiting PAMP-induced ROS generation. In PTI, phosphorylation relaying by RLKs and RLCKs is critical for the initiation of downstream signaling. The protein is Necrosis-inducing secreted protein 1 of Colletotrichum higginsianum (strain IMI 349063) (Crucifer anthracnose fungus).